We begin with the raw amino-acid sequence, 764 residues long: Dehydrocurvularin biosynthesis regulator (764 aa).

The zn(2)-C6 fungal-type DNA-binding region spans 28–59 (CWECKRRKMKCIFDPRITSTSCNGCRQRGSPC). Disordered regions lie at residues 73–94 (HGANDSASLDASTPIATPSDDA), 112–136 (YRYLPSSKSSDKRFTTRSSNDASTC), and 633–672 (FPTSINTNSDPVHVHSQADFPSSTQLSSSSHPNTPSPALS). The segment covering 77-88 (DSASLDASTPIA) has biased composition (polar residues). Residues 663–672 (HPNTPSPALS) are compositionally biased toward polar residues.

The protein resides in the nucleus. Transcription factor involved in regulation of the dehydrocurvularin biosynthesis gene cluster. This is Dehydrocurvularin biosynthesis regulator from Alternaria cinerariae.